A 271-amino-acid chain; its full sequence is Putative F-box protein L165 (271 aa).

The region spanning 4 to 49 (ICELFDDVILEIMNLLSDTDKINFMFCCSRFYYFIDLVYYNDIYDY) is the F-box domain. Residues 251 to 271 (NIPKIVPKNTHYRNSSKKYRY) are disordered. A compositionally biased stretch (basic residues) spans 260 to 271 (THYRNSSKKYRY).

In Acanthamoeba polyphaga mimivirus (APMV), this protein is Putative F-box protein L165.